Reading from the N-terminus, the 322-residue chain is Ribose 1,5-bisphosphate isomerase (322 aa).

Substrate contacts are provided by residues 20 to 23 and arginine 63; that span reads RGAG. Cysteine 133 acts as the Proton acceptor in catalysis. Substrate is bound at residue 135–137; that stretch reads SKA. Aspartate 202 acts as the Proton donor in catalysis. Substrate is bound by residues 212 to 213 and lysine 238; that span reads NK.

This sequence belongs to the eIF-2B alpha/beta/delta subunits family. R15P isomerase subfamily. As to quaternary structure, homohexamer; trimer of dimers.

It catalyses the reaction alpha-D-ribose 1,5-bisphosphate = D-ribulose 1,5-bisphosphate. Is highly activated in the presence of AMP, with an increase of &gt;40-fold in activity levels. Among other nucleotides, isomerase activity is slightly increased in the presence of GMP, but CMP, UMP, TMP, and NAD(+) have no effect; therefore, AMP is likely the major activator of R15P isomerase in vivo. To a lesser extent, various compounds with an adenosyl moiety, such as dAMP, adenosine, or methylthioadenosine, can also act as activators. The regulation of this enzyme by AMP prevents excess degradation of intracellular AMP by the archaeal AMP degradation pathway. Catalyzes the isomerization of ribose 1,5-bisphosphate (R15P) to ribulose 1,5-bisphosphate (RuBP), the CO(2) acceptor and substrate for RubisCO. Only accepts the alpha-anomer of D-ribose 1,5-bisphosphate as substrate, being inactive on the beta-anomer. Displays a strict substrate specificity, since other phosphorylated sugars such as R5P, ribose, G16P, G6P, G1P, FBP, F6P, and PRPP, are not substrates. Functions in an archaeal AMP degradation pathway, together with AMP phosphorylase and RubisCO. The protein is Ribose 1,5-bisphosphate isomerase of Thermococcus kodakarensis (strain ATCC BAA-918 / JCM 12380 / KOD1) (Pyrococcus kodakaraensis (strain KOD1)).